We begin with the raw amino-acid sequence, 398 residues long: 1-deoxy-D-xylulose 5-phosphate reductoisomerase (398 aa).

Positions 11, 12, 13, 14, 38, 39, and 125 each coordinate NADPH. Lys126 is a binding site for 1-deoxy-D-xylulose 5-phosphate. Residue Glu127 coordinates NADPH. Asp151 contributes to the Mn(2+) binding site. Residues Ser152, Glu153, Ser179, and His202 each coordinate 1-deoxy-D-xylulose 5-phosphate. Glu153 contacts Mn(2+). Gly208 lines the NADPH pocket. 1-deoxy-D-xylulose 5-phosphate-binding residues include Ser215, Asn220, Lys221, and Glu224. Glu224 lines the Mn(2+) pocket.

It belongs to the DXR family. It depends on Mg(2+) as a cofactor. The cofactor is Mn(2+).

It catalyses the reaction 2-C-methyl-D-erythritol 4-phosphate + NADP(+) = 1-deoxy-D-xylulose 5-phosphate + NADPH + H(+). The protein operates within isoprenoid biosynthesis; isopentenyl diphosphate biosynthesis via DXP pathway; isopentenyl diphosphate from 1-deoxy-D-xylulose 5-phosphate: step 1/6. In terms of biological role, catalyzes the NADPH-dependent rearrangement and reduction of 1-deoxy-D-xylulose-5-phosphate (DXP) to 2-C-methyl-D-erythritol 4-phosphate (MEP). This chain is 1-deoxy-D-xylulose 5-phosphate reductoisomerase, found in Burkholderia lata (strain ATCC 17760 / DSM 23089 / LMG 22485 / NCIMB 9086 / R18194 / 383).